A 539-amino-acid polypeptide reads, in one-letter code: CTP synthase (539 aa).

Residues 1-268 (MSFKSIFLTG…SDFLLNKLGF (268 aa)) are amidoligase domain. Position 14 (Ser14) interacts with CTP. Ser14 lines the UTP pocket. Position 15 to 20 (15 to 20 (SLGKGL)) interacts with ATP. Tyr55 lines the L-glutamine pocket. Asp72 lines the ATP pocket. Mg(2+) is bound by residues Asp72 and Glu142. CTP is bound by residues 149 to 151 (DIE), 188 to 193 (KTKPTQ), and Lys224. Residues 188 to 193 (KTKPTQ) and Lys224 each bind UTP. Residues 294-532 (RIGLVGKYLE…IRAAKAYSLE (239 aa)) form the Glutamine amidotransferase type-1 domain. Residue Gly353 participates in L-glutamine binding. The Nucleophile; for glutamine hydrolysis role is filled by Cys380. L-glutamine-binding positions include 381 to 384 (LGMQ), Glu404, and Arg460. Residues His505 and Glu507 contribute to the active site.

The protein belongs to the CTP synthase family. As to quaternary structure, homotetramer.

It carries out the reaction UTP + L-glutamine + ATP + H2O = CTP + L-glutamate + ADP + phosphate + 2 H(+). The catalysed reaction is L-glutamine + H2O = L-glutamate + NH4(+). It catalyses the reaction UTP + NH4(+) + ATP = CTP + ADP + phosphate + 2 H(+). The protein operates within pyrimidine metabolism; CTP biosynthesis via de novo pathway; CTP from UDP: step 2/2. Allosterically activated by GTP, when glutamine is the substrate; GTP has no effect on the reaction when ammonia is the substrate. The allosteric effector GTP functions by stabilizing the protein conformation that binds the tetrahedral intermediate(s) formed during glutamine hydrolysis. Inhibited by the product CTP, via allosteric rather than competitive inhibition. Functionally, catalyzes the ATP-dependent amination of UTP to CTP with either L-glutamine or ammonia as the source of nitrogen. Regulates intracellular CTP levels through interactions with the four ribonucleotide triphosphates. The polypeptide is CTP synthase (Chlamydia trachomatis serovar L2 (strain ATCC VR-902B / DSM 19102 / 434/Bu)).